Here is a 433-residue protein sequence, read N- to C-terminus: Serine--tRNA ligase (433 aa).

235–237 (TSE) serves as a coordination point for L-serine. An ATP-binding site is contributed by 266–268 (RSE). An L-serine-binding site is contributed by E289. 353-356 (EISS) is an ATP binding site. S388 is an L-serine binding site.

Belongs to the class-II aminoacyl-tRNA synthetase family. Type-1 seryl-tRNA synthetase subfamily. Homodimer. The tRNA molecule binds across the dimer.

The protein localises to the cytoplasm. The enzyme catalyses tRNA(Ser) + L-serine + ATP = L-seryl-tRNA(Ser) + AMP + diphosphate + H(+). It catalyses the reaction tRNA(Sec) + L-serine + ATP = L-seryl-tRNA(Sec) + AMP + diphosphate + H(+). Its pathway is aminoacyl-tRNA biosynthesis; selenocysteinyl-tRNA(Sec) biosynthesis; L-seryl-tRNA(Sec) from L-serine and tRNA(Sec): step 1/1. Its function is as follows. Catalyzes the attachment of serine to tRNA(Ser). Is also able to aminoacylate tRNA(Sec) with serine, to form the misacylated tRNA L-seryl-tRNA(Sec), which will be further converted into selenocysteinyl-tRNA(Sec). The sequence is that of Serine--tRNA ligase from Burkholderia thailandensis (strain ATCC 700388 / DSM 13276 / CCUG 48851 / CIP 106301 / E264).